A 542-amino-acid polypeptide reads, in one-letter code: Phosphoacetylglucosamine mutase (542 aa).

Position 1 is an N-acetylmethionine (M1). T62 carries the post-translational modification Phosphothreonine. Residue S64 is the Phosphoserine intermediate of the active site. Residues S64, D276, D278, and D280 each coordinate Mg(2+). The residue at position 64 (S64) is a Phosphoserine. Substrate is bound by residues 370 to 372, 496 to 500, and R505; these read EAN and RPSGT.

It belongs to the phosphohexose mutase family. It depends on Mg(2+) as a cofactor.

The enzyme catalyses N-acetyl-alpha-D-glucosamine 1-phosphate = N-acetyl-D-glucosamine 6-phosphate. Its pathway is nucleotide-sugar biosynthesis; UDP-N-acetyl-alpha-D-glucosamine biosynthesis; N-acetyl-alpha-D-glucosamine 1-phosphate from alpha-D-glucosamine 6-phosphate (route I): step 2/2. Its function is as follows. Catalyzes the conversion of GlcNAc-6-P into GlcNAc-1-P during the synthesis of uridine diphosphate/UDP-GlcNAc, a sugar nucleotide critical to multiple glycosylation pathways including protein N- and O-glycosylation. The protein is Phosphoacetylglucosamine mutase of Mus musculus (Mouse).